The chain runs to 358 residues: Src kinase-associated phosphoprotein 2 (358 aa).

A phosphoserine mark is found at Ser5 and Ser6. Residues 62 to 88 (ESQDKGDAEDGEEYDDPFAGPPDTISL) form a disordered region. Tyr75 bears the Phosphotyrosine mark. A phosphoserine mark is found at Ser87 and Ser90. Residues 116–219 (FVLKAGYLEK…WVQQLNFVLQ (104 aa)) enclose the PH domain. Residues Tyr151 and Tyr197 each carry the phosphotyrosine modification. Ser223 is subject to Phosphoserine. Positions 232–254 (ERGELYDDVDHPLPSSSPTRSLP) are disordered. Over residues 243–253 (PLPSSSPTRSL) the composition is skewed to low complexity. A Phosphotyrosine modification is found at Tyr260. Phosphoserine occurs at positions 282 and 285. An SH3 domain is found at 296–357 (NYANFYQGLW…PKAYVMEMYD (62 aa)).

It belongs to the SKAP family. In terms of assembly, interacts with FYB1, which is required for SKAP2 protein stability. Interacts with PTPNS1. Part of a complex consisting of SKAP2, FYB1 and PTPNS1. Part of a complex consisting of SKAP2, FYB1 and LILRB3. Interacts with LAT, GRB2, PTK2B and PRAM1. May interact with actin. May interact with FYN, HCK and LYN. Interacts with FASLG.

It localises to the cytoplasm. Functionally, may be involved in B-cell and macrophage adhesion processes. In B-cells, may act by coupling the B-cell receptor (BCR) to integrin activation. May play a role in src signaling pathway. In Bos taurus (Bovine), this protein is Src kinase-associated phosphoprotein 2 (SKAP2).